The sequence spans 582 residues: 5-aminolevulinate synthase, erythroid-specific, mitochondrial (582 aa).

Arginine 158 provides a ligand contact to succinyl-CoA. Pyridoxal 5'-phosphate contacts are provided by cysteine 253 and phenylalanine 254. Positions 275 and 294 each coordinate succinyl-CoA. Pyridoxal 5'-phosphate is bound by residues serine 327, histidine 355, and threonine 383. Lysine 386 is a catalytic residue. Lysine 386 carries the post-translational modification N6-(pyridoxal phosphate)lysine. Residues threonine 415 and threonine 416 each coordinate pyridoxal 5'-phosphate. Threonine 503 serves as a coordination point for succinyl-CoA.

The protein belongs to the class-II pyridoxal-phosphate-dependent aminotransferase family. As to quaternary structure, homodimer. The cofactor is pyridoxal 5'-phosphate.

The protein resides in the mitochondrion inner membrane. The enzyme catalyses succinyl-CoA + glycine + H(+) = 5-aminolevulinate + CO2 + CoA. The protein operates within porphyrin-containing compound metabolism; protoporphyrin-IX biosynthesis; 5-aminolevulinate from glycine: step 1/1. In terms of biological role, catalyzes the pyridoxal 5'-phosphate (PLP)-dependent condensation of succinyl-CoA and glycine to form aminolevulinic acid (ALA), with CoA and CO2 as by-products. Contributes significantly to heme formation during erythropoiesis. The polypeptide is 5-aminolevulinate synthase, erythroid-specific, mitochondrial (alas2) (Opsanus tau (Oyster toadfish)).